Here is a 304-residue protein sequence, read N- to C-terminus: Ribosomal RNA small subunit methyltransferase H (304 aa).

S-adenosyl-L-methionine-binding positions include 37–39 (AGH), aspartate 57, phenylalanine 79, aspartate 100, and histidine 107.

It belongs to the methyltransferase superfamily. RsmH family.

It is found in the cytoplasm. It catalyses the reaction cytidine(1402) in 16S rRNA + S-adenosyl-L-methionine = N(4)-methylcytidine(1402) in 16S rRNA + S-adenosyl-L-homocysteine + H(+). Specifically methylates the N4 position of cytidine in position 1402 (C1402) of 16S rRNA. This Bacteroides thetaiotaomicron (strain ATCC 29148 / DSM 2079 / JCM 5827 / CCUG 10774 / NCTC 10582 / VPI-5482 / E50) protein is Ribosomal RNA small subunit methyltransferase H.